The primary structure comprises 127 residues: Thioredoxin domain-containing protein 8 (127 aa).

The region spanning 2-127 (VQKIKSMREF…KLEEKIQELM (126 aa)) is the Thioredoxin domain. A disulfide bond links cysteine 32 and cysteine 35.

This sequence belongs to the thioredoxin family. Testis-specific. Expressed in spermatozoa, sperm tail, elongated and round spermatids.

The protein resides in the cytoplasm. Its subcellular location is the golgi apparatus. In terms of biological role, may be required for post-translational modifications of proteins required for acrosomal biogenesis. May act by reducing disulfide bonds within the sperm. The protein is Thioredoxin domain-containing protein 8 (Txndc8) of Rattus norvegicus (Rat).